The primary structure comprises 312 residues: DNA-directed RNA polymerase subunit alpha (312 aa).

The interval 1-226 (MIEFEKPIIT…EHLNLFTDLT (226 aa)) is alpha N-terminal domain (alpha-NTD). Residues 242–312 (NDEKLLDRTI…DLGLGLKNDK (71 aa)) form an alpha C-terminal domain (alpha-CTD) region.

The protein belongs to the RNA polymerase alpha chain family. In terms of assembly, homodimer. The RNAP catalytic core consists of 2 alpha, 1 beta, 1 beta' and 1 omega subunit. When a sigma factor is associated with the core the holoenzyme is formed, which can initiate transcription.

The catalysed reaction is RNA(n) + a ribonucleoside 5'-triphosphate = RNA(n+1) + diphosphate. DNA-dependent RNA polymerase catalyzes the transcription of DNA into RNA using the four ribonucleoside triphosphates as substrates. The chain is DNA-directed RNA polymerase subunit alpha from Streptococcus thermophilus (strain CNRZ 1066).